Reading from the N-terminus, the 354-residue chain is UDP-3-O-acylglucosamine N-acyltransferase (354 aa).

Catalysis depends on histidine 258, which acts as the Proton acceptor.

Belongs to the transferase hexapeptide repeat family. LpxD subfamily. In terms of assembly, homotrimer.

The enzyme catalyses a UDP-3-O-[(3R)-3-hydroxyacyl]-alpha-D-glucosamine + a (3R)-hydroxyacyl-[ACP] = a UDP-2-N,3-O-bis[(3R)-3-hydroxyacyl]-alpha-D-glucosamine + holo-[ACP] + H(+). It functions in the pathway bacterial outer membrane biogenesis; LPS lipid A biosynthesis. Its function is as follows. Catalyzes the N-acylation of UDP-3-O-acylglucosamine using 3-hydroxyacyl-ACP as the acyl donor. Is involved in the biosynthesis of lipid A, a phosphorylated glycolipid that anchors the lipopolysaccharide to the outer membrane of the cell. The polypeptide is UDP-3-O-acylglucosamine N-acyltransferase (Rhizobium meliloti (strain 1021) (Ensifer meliloti)).